The primary structure comprises 1320 residues: Clustered mitochondria protein homolog (1320 aa).

Disordered regions lie at residues 166–241, 552–582, and 683–708; these read QQLE…KQKM, YGSM…TKSI, and LKEK…EDVQ. The segment covering 185 to 194 has biased composition (basic and acidic residues); the sequence is TEDKEEKETI. Positions 202 to 213 are enriched in basic residues; that stretch reads KKNKHHNKKGNK. Composition is skewed to basic and acidic residues over residues 226-241, 565-575, and 683-695; these read NEEK…KQKM, QQQKEENEENK, and LKEK…KEGI. A Clu domain is found at 379–649; that stretch reads KTNRYDINKG…KATPRDPNYT (271 aa). TPR repeat units follow at residues 955-988, 997-1030, 1039-1072, 1081-1114, and 1123-1156; these read GLDL…YHQV, GACF…TEKT, VQAY…TDLL, ASIY…QEFL, and STTY…LEKE. Residues 1204 to 1320 form a disordered region; sequence KADQFKKSQP…SKPNKKSSKN (117 aa). Over residues 1237–1247 the composition is skewed to basic residues; sequence KPKKSQSKKSK. Over residues 1248–1311 the composition is skewed to low complexity; that stretch reads STNTTTTTNT…PTSSSAADSS (64 aa).

It belongs to the CLU family.

It is found in the cytoplasm. In terms of biological role, mRNA-binding protein involved in proper cytoplasmic distribution of mitochondria. In Dictyostelium discoideum (Social amoeba), this protein is Clustered mitochondria protein homolog.